A 371-amino-acid polypeptide reads, in one-letter code: GDSL esterase/lipase At3g27950 (371 aa).

Positions 1 to 23 (MAISKITLAIIVLLLGFTEKLSA) are cleaved as a signal peptide. The active-site Nucleophile is the Ser39. 5 N-linked (GlcNAc...) asparagine glycosylation sites follow: Asn82, Asn143, Asn178, Asn194, and Asn315. Active-site residues include Asp334 and His337.

This sequence belongs to the 'GDSL' lipolytic enzyme family.

The protein localises to the secreted. This Arabidopsis thaliana (Mouse-ear cress) protein is GDSL esterase/lipase At3g27950.